A 310-amino-acid polypeptide reads, in one-letter code: MKTLTRKLSRTAITLVLVILAFIAIFRAWVYYTESPWTRDARFSADVVAIAPDVAGLITHVNVHDNQLVKKDQVLFTIDQPRYQKALAEAEADVAYYQVLAQEKRQEAGRRNRLGVQAMSREEIDQANNVLQTVLHQLAKAQATRDLAKLDLERTVIRAPADGWVTNLNVYAGEFITRGSTAVALVKKNSFYVQAYMEETKLEGVRPGYRAEITPLGSNRVLKGTVDSVAAGVTNASSTSDAKGMATIDSNLEWVRLAQRVPVRIRLDEQQGNLWPAGTTATVVITGKQDRDASQDSFFRKLAHRLREFG.

Residues 12–32 (AITLVLVILAFIAIFRAWVYY) form a helical membrane-spanning segment.

This sequence belongs to the membrane fusion protein (MFP) (TC 8.A.1) family.

Its subcellular location is the cell inner membrane. Its function is as follows. Forms an efflux pump with AaeB. This is p-hydroxybenzoic acid efflux pump subunit AaeA from Salmonella heidelberg (strain SL476).